The primary structure comprises 180 residues: Small ribosomal subunit protein uS5 (180 aa).

Residues 13–76 (LEERVVQINR…EAAKKNLIRV (64 aa)) form the S5 DRBM domain.

Belongs to the universal ribosomal protein uS5 family. Part of the 30S ribosomal subunit. Contacts proteins S4 and S8.

In terms of biological role, with S4 and S12 plays an important role in translational accuracy. Located at the back of the 30S subunit body where it stabilizes the conformation of the head with respect to the body. The polypeptide is Small ribosomal subunit protein uS5 (Roseiflexus sp. (strain RS-1)).